The following is a 157-amino-acid chain: Isotocin-neurophysin IT 1 (157 aa).

The N-terminal stretch at M1–A20 is a signal peptide. A disulfide bridge links C21 with C26. G29 is modified (glycine amide). 7 disulfide bridges follow: C42–C86, C45–C59, C53–C76, C60–C66, C93–C106, C100–C118, and C107–C112.

It belongs to the vasopressin/oxytocin family. In terms of processing, seven disulfide bonds are present in neurophysin.

It is found in the secreted. In terms of biological role, isotocin causes contraction of smooth muscles. The polypeptide is Isotocin-neurophysin IT 1 (Oncorhynchus masou (Cherry salmon)).